A 292-amino-acid chain; its full sequence is Cyclin-dependent kinase 5 (292 aa).

The Protein kinase domain maps to 4–286; sequence YEKLEKIGEG…AEEALQHPYF (283 aa). ATP contacts are provided by residues 10 to 18 and lysine 33; that span reads IGEGTYGTV. Position 15 is a phosphotyrosine; by ABL1, EPHA4 and FYN (tyrosine 15). Threonine 17 is subject to Phosphothreonine. An N6-acetyllysine modification is found at lysine 56. The residue at position 72 (serine 72) is a Phosphoserine. Aspartate 126 functions as the Proton acceptor in the catalytic mechanism. A Phosphoserine modification is found at serine 159.

Belongs to the protein kinase superfamily. CMGC Ser/Thr protein kinase family. CDC2/CDKX subfamily. In terms of assembly, heterodimer composed of a catalytic subunit CDK5 and a regulatory subunit CDK5R1 (p25) and macromolecular complex composed of at least CDK5, CDK5R1 (p35) and CDK5RAP1 or CDK5RAP2 or CDK5RAP3. Only the heterodimer shows kinase activity. Under neurotoxic stress and neuronal injury conditions, p35 is cleaved by calpain to generate p25 that hyperactivates CDK5, that becomes functionally disabled and often toxic. Found in a trimolecular complex with CABLES1 and ABL1. Interacts with CABLES1 and CABLES2. Interacts with AATK and GSTP1. Binds to HDAC1 when in complex with p25. Interaction with myristoylation p35 promotes CDK5 association with membranes. Both isoforms 1 and 2 interacts with beta-catenin/CTNNB1. Interacts with delta-catenin/CTNND2 and APEX1. Interacts with P53/TP53 in neurons. Interacts with PTK2/FAK1. Interacts with EPHA4; may mediate the activation of NGEF by EPHA4. The complex p35/CDK5 interacts with CLOCK. Interacts with HTR6. Phosphorylation on Tyr-15 by ABL1 and FYN, and on Ser-159 by casein kinase 1 promotes kinase activity. By contrast, phosphorylation at Thr-14 inhibits activity. In terms of processing, phosphorylation at Ser-159 is essential for maximal catalytic activity. In terms of tissue distribution, expressed in hippocampal neuronal synaptic termini (at protein level). Expressed predominantly in post-mitotic neurons of the central and peripheral nervous system.

The protein localises to the cytoplasm. It localises to the nucleus. The protein resides in the cell membrane. It is found in the perikaryon. Its subcellular location is the cell projection. The protein localises to the lamellipodium. It localises to the growth cone. The protein resides in the postsynaptic density. It is found in the synapse. It catalyses the reaction L-seryl-[protein] + ATP = O-phospho-L-seryl-[protein] + ADP + H(+). It carries out the reaction L-threonyl-[protein] + ATP = O-phospho-L-threonyl-[protein] + ADP + H(+). Its activity is regulated as follows. Inhibited by 2-(1-ethyl-2-hydroxyethylamino)-6-benzylamino-9-isopropylpurine (roscovitine), 1-isopropyl-4-aminobenzyl-6-ether-linked benzimidazoles, resveratrol, AT-7519 and olomoucine. Activated by CDK5R1 (p35) and CDK5R2 (p39) during the development of the nervous system; degradation of CDK5R1 (p35) and CDK5R2 (p39) by proteasome result in down regulation of kinase activity, during this process, CDK5 phosphorylates p35 and induces its ubiquitination and subsequent degradation. Kinase activity is mainly determined by the amount of p35 available and subcellular location; reversible association to plasma membrane inhibits activity. Long-term inactivation as well as CDK5R1 (p25)-mediated hyperactivation of CDK5 triggers cell death. The pro-death activity of hyperactivated CDK5 is suppressed by membrane association of CDK5, via myristoylation of p35. Brain-derived neurotrophic factor, glial-derived neurotrophic factor, nerve growth factor (NGF), retinoic acid, laminin and neuregulin promote activity. Neurotoxicity enhances nuclear activity, thus leading to MEF2 phosphorylation and inhibition prior to apoptosis of cortical neurons. Repression by GSTP1 via p25/p35 translocation prevents neurodegeneration. Functionally, proline-directed serine/threonine-protein kinase essential for neuronal cell cycle arrest and differentiation and may be involved in apoptotic cell death in neuronal diseases by triggering abortive cell cycle re-entry. Interacts with D1 and D3-type G1 cyclins. Phosphorylates SRC, NOS3, VIM/vimentin, p35/CDK5R1, MEF2A, SIPA1L1, SH3GLB1, PXN, PAK1, MCAM/MUC18, SEPT5, SYN1, DNM1, AMPH, SYNJ1, CDK16, RAC1, RHOA, CDC42, TONEBP/NFAT5, MAPT/TAU, MAP1B, histone H1, p53/TP53, HDAC1, APEX1, PTK2/FAK1, huntingtin/HTT, ATM, MAP2, NEFH and NEFM. Regulates several neuronal development and physiological processes including neuronal survival, migration and differentiation, axonal and neurite growth, synaptogenesis, oligodendrocyte differentiation, synaptic plasticity and neurotransmission, by phosphorylating key proteins. Negatively regulates the CACNA1B/CAV2.2 -mediated Ca(2+) release probability at hippocampal neuronal soma and synaptic terminals. Activated by interaction with CDK5R1 (p35) and CDK5R2 (p39), especially in postmitotic neurons, and promotes CDK5R1 (p35) expression in an autostimulation loop. Phosphorylates many downstream substrates such as Rho and Ras family small GTPases (e.g. PAK1, RAC1, RHOA, CDC42) or microtubule-binding proteins (e.g. MAPT/TAU, MAP2, MAP1B), and modulates actin dynamics to regulate neurite growth and/or spine morphogenesis. Also phosphorylates exocytosis associated proteins such as MCAM/MUC18, SEPT5, SYN1, and CDK16/PCTAIRE1 as well as endocytosis associated proteins such as DNM1, AMPH and SYNJ1 at synaptic terminals. In the mature central nervous system (CNS), regulates neurotransmitter movements by phosphorylating substrates associated with neurotransmitter release and synapse plasticity; synaptic vesicle exocytosis, vesicles fusion with the presynaptic membrane, and endocytosis. Promotes cell survival by activating anti-apoptotic proteins BCL2 and STAT3, and negatively regulating of JNK3/MAPK10 activity. Phosphorylation of p53/TP53 in response to genotoxic and oxidative stresses enhances its stabilization by preventing ubiquitin ligase-mediated proteasomal degradation, and induces transactivation of p53/TP53 target genes, thus regulating apoptosis. Phosphorylation of p35/CDK5R1 enhances its stabilization by preventing calpain-mediated proteolysis producing p25/CDK5R1 and avoiding ubiquitin ligase-mediated proteasomal degradation. During aberrant cell-cycle activity and DNA damage, p25/CDK5 activity elicits cell-cycle activity and double-strand DNA breaks that precedes neuronal death by deregulating HDAC1. DNA damage triggered phosphorylation of huntingtin/HTT in nuclei of neurons protects neurons against polyglutamine expansion as well as DNA damage mediated toxicity. Phosphorylation of PXN reduces its interaction with PTK2/FAK1 in matrix-cell focal adhesions (MCFA) during oligodendrocytes (OLs) differentiation. Negative regulator of Wnt/beta-catenin signaling pathway. Activator of the GAIT (IFN-gamma-activated inhibitor of translation) pathway, which suppresses expression of a post-transcriptional regulon of proinflammatory genes in myeloid cells; phosphorylates the linker domain of glutamyl-prolyl tRNA synthetase (EPRS) in a IFN-gamma-dependent manner, the initial event in assembly of the GAIT complex. Phosphorylation of SH3GLB1 is required for autophagy induction in starved neurons. Phosphorylation of TONEBP/NFAT5 in response to osmotic stress mediates its rapid nuclear localization. MEF2 is inactivated by phosphorylation in nucleus in response to neurotoxin, thus leading to neuronal apoptosis. APEX1 AP-endodeoxyribonuclease is repressed by phosphorylation, resulting in accumulation of DNA damage and contributing to neuronal death. NOS3 phosphorylation down regulates NOS3-derived nitrite (NO) levels. SRC phosphorylation mediates its ubiquitin-dependent degradation and thus leads to cytoskeletal reorganization. May regulate endothelial cell migration and angiogenesis via the modulation of lamellipodia formation. Involved in dendritic spine morphogenesis by mediating the EFNA1-EPHA4 signaling. The complex p35/CDK5 participates in the regulation of the circadian clock by modulating the function of CLOCK protein: phosphorylates CLOCK at 'Thr-451' and 'Thr-461' and regulates the transcriptional activity of the CLOCK-BMAL1 heterodimer in association with altered stability and subcellular distribution. This Rattus norvegicus (Rat) protein is Cyclin-dependent kinase 5.